Here is a 717-residue protein sequence, read N- to C-terminus: Copine family protein 5 (717 aa).

The 126-residue stretch at 193 to 318 (YLGGIIVSAE…KYGPGSDNVY (126 aa)) folds into the C2 domain. Residues 377–567 (ELDQRRFDGE…LNKSRIAETA (191 aa)) enclose the VWFA domain.

This sequence belongs to the copine family.

The chain is Copine family protein 5 (cpna-5) from Caenorhabditis elegans.